We begin with the raw amino-acid sequence, 730 residues long: Elongation factor 2 (730 aa).

In terms of domain architecture, tr-type G spans 19–260; it reads DRIRNIGIVA…MVVKHLPNPL (242 aa). GTP contacts are provided by residues 28 to 35, 94 to 98, and 148 to 151; these read AHIDHGKT, DTPGH, and NKVD. Histidine 597 is subject to Diphthamide.

Belongs to the TRAFAC class translation factor GTPase superfamily. Classic translation factor GTPase family. EF-G/EF-2 subfamily.

The protein localises to the cytoplasm. In terms of biological role, catalyzes the GTP-dependent ribosomal translocation step during translation elongation. During this step, the ribosome changes from the pre-translocational (PRE) to the post-translocational (POST) state as the newly formed A-site-bound peptidyl-tRNA and P-site-bound deacylated tRNA move to the P and E sites, respectively. Catalyzes the coordinated movement of the two tRNA molecules, the mRNA and conformational changes in the ribosome. This Methanoculleus marisnigri (strain ATCC 35101 / DSM 1498 / JR1) protein is Elongation factor 2.